The sequence spans 344 residues: Protein RecA (344 aa).

65 to 72 is a binding site for ATP; it reads GPESSGKT.

This sequence belongs to the RecA family.

The protein localises to the cytoplasm. In terms of biological role, can catalyze the hydrolysis of ATP in the presence of single-stranded DNA, the ATP-dependent uptake of single-stranded DNA by duplex DNA, and the ATP-dependent hybridization of homologous single-stranded DNAs. It interacts with LexA causing its activation and leading to its autocatalytic cleavage. The protein is Protein RecA of Xanthomonas oryzae pv. oryzae (strain PXO99A).